Reading from the N-terminus, the 102-residue chain is Large ribosomal subunit protein bL21 (102 aa).

The protein belongs to the bacterial ribosomal protein bL21 family. Part of the 50S ribosomal subunit. Contacts protein L20.

Its function is as follows. This protein binds to 23S rRNA in the presence of protein L20. This Bifidobacterium longum (strain DJO10A) protein is Large ribosomal subunit protein bL21.